The following is a 357-amino-acid chain: tRNA/tmRNA (uracil-C(5))-methyltransferase (357 aa).

S-adenosyl-L-methionine-binding residues include glutamine 180, tyrosine 209, asparagine 214, glutamate 230, and aspartate 290. Cysteine 315 acts as the Nucleophile in catalysis. The Proton acceptor role is filled by glutamate 349.

It belongs to the class I-like SAM-binding methyltransferase superfamily. RNA M5U methyltransferase family. TrmA subfamily.

It catalyses the reaction uridine(54) in tRNA + S-adenosyl-L-methionine = 5-methyluridine(54) in tRNA + S-adenosyl-L-homocysteine + H(+). It carries out the reaction uridine(341) in tmRNA + S-adenosyl-L-methionine = 5-methyluridine(341) in tmRNA + S-adenosyl-L-homocysteine + H(+). Functionally, dual-specificity methyltransferase that catalyzes the formation of 5-methyluridine at position 54 (m5U54) in all tRNAs, and that of position 341 (m5U341) in tmRNA (transfer-mRNA). This is tRNA/tmRNA (uracil-C(5))-methyltransferase from Campylobacter jejuni subsp. jejuni serotype O:23/36 (strain 81-176).